Consider the following 316-residue polypeptide: Formimidoylglutamase (316 aa).

The Mn(2+) site is built by His-127, Asp-156, His-158, Asp-160, Asp-247, and Asp-249.

Belongs to the arginase family. It depends on Mn(2+) as a cofactor.

The catalysed reaction is N-formimidoyl-L-glutamate + H2O = formamide + L-glutamate. It functions in the pathway amino-acid degradation; L-histidine degradation into L-glutamate; L-glutamate from N-formimidoyl-L-glutamate (hydrolase route): step 1/1. Its function is as follows. Catalyzes the conversion of N-formimidoyl-L-glutamate to L-glutamate and formamide. The sequence is that of Formimidoylglutamase from Cupriavidus pinatubonensis (strain JMP 134 / LMG 1197) (Cupriavidus necator (strain JMP 134)).